A 514-amino-acid chain; its full sequence is 2,3-bisphosphoglycerate-independent phosphoglycerate mutase (514 aa).

Residues Asp-14 and Ser-64 each coordinate Mn(2+). Ser-64 acts as the Phosphoserine intermediate in catalysis. Substrate is bound by residues His-125, 155–156, Arg-187, Arg-193, 263–266, and Lys-337; these read RD and RADR. The Mn(2+) site is built by Asp-404, His-408, Asp-445, His-446, and His-464.

It belongs to the BPG-independent phosphoglycerate mutase family. In terms of assembly, monomer. Mn(2+) is required as a cofactor.

It catalyses the reaction (2R)-2-phosphoglycerate = (2R)-3-phosphoglycerate. It participates in carbohydrate degradation; glycolysis; pyruvate from D-glyceraldehyde 3-phosphate: step 3/5. Catalyzes the interconversion of 2-phosphoglycerate and 3-phosphoglycerate. This Serratia proteamaculans (strain 568) protein is 2,3-bisphosphoglycerate-independent phosphoglycerate mutase.